The sequence spans 272 residues: GTP cyclohydrolase FolE2 (272 aa).

This sequence belongs to the GTP cyclohydrolase IV family.

It carries out the reaction GTP + H2O = 7,8-dihydroneopterin 3'-triphosphate + formate + H(+). It functions in the pathway cofactor biosynthesis; 7,8-dihydroneopterin triphosphate biosynthesis; 7,8-dihydroneopterin triphosphate from GTP: step 1/1. Its function is as follows. Converts GTP to 7,8-dihydroneopterin triphosphate. The polypeptide is GTP cyclohydrolase FolE2 (Polynucleobacter asymbioticus (strain DSM 18221 / CIP 109841 / QLW-P1DMWA-1) (Polynucleobacter necessarius subsp. asymbioticus)).